A 239-amino-acid polypeptide reads, in one-letter code: Ribosomal RNA small subunit methyltransferase G (239 aa).

Residues glycine 78, phenylalanine 83, alanine 129–glutamate 130, and arginine 148 contribute to the S-adenosyl-L-methionine site.

The protein belongs to the methyltransferase superfamily. RNA methyltransferase RsmG family.

Its subcellular location is the cytoplasm. Functionally, specifically methylates the N7 position of a guanine in 16S rRNA. In Alkaliphilus oremlandii (strain OhILAs) (Clostridium oremlandii (strain OhILAs)), this protein is Ribosomal RNA small subunit methyltransferase G.